The primary structure comprises 137 residues: Large ribosomal subunit protein uL16 (137 aa).

Belongs to the universal ribosomal protein uL16 family. Part of the 50S ribosomal subunit.

Functionally, binds 23S rRNA and is also seen to make contacts with the A and possibly P site tRNAs. This is Large ribosomal subunit protein uL16 from Thioalkalivibrio sulfidiphilus (strain HL-EbGR7).